A 322-amino-acid polypeptide reads, in one-letter code: Ribosomal RNA small subunit methyltransferase H (322 aa).

S-adenosyl-L-methionine-binding positions include 42 to 44 (GGH), aspartate 62, phenylalanine 86, aspartate 107, and glutamine 114.

Belongs to the methyltransferase superfamily. RsmH family.

The protein resides in the cytoplasm. It catalyses the reaction cytidine(1402) in 16S rRNA + S-adenosyl-L-methionine = N(4)-methylcytidine(1402) in 16S rRNA + S-adenosyl-L-homocysteine + H(+). Specifically methylates the N4 position of cytidine in position 1402 (C1402) of 16S rRNA. The chain is Ribosomal RNA small subunit methyltransferase H from Janthinobacterium sp. (strain Marseille) (Minibacterium massiliensis).